We begin with the raw amino-acid sequence, 742 residues long: MARRITLNSLKPLSAMSNHPSLTPTTTPTAATASTSTAPSIDSSTAPSLPSTFNQMIFEFNGVKYTGAPHAWMMPYRGFEQHMVNMVIETRPDATFSRFDDLLSAIVTALAVNGITATTSLTDGELVLLRFADLATRHASLPSPSPAISDWSQSVPGPLLDTLEYGAPLIPAEPTATPAPTPLAPADYPPPPPHVADPAVSHSLVALDVPDAALPSMPRASTSTASIPSLMSLPIASPPRSRSSTLSSSTSTSTPRLPGTVVPRRPSHIADDETYNRSRAAYAMGVPAMSPMYCTGKERHFEQTFYSAYPHAANGVWTAYQHSIILIAAPTEDISLLTLHNVEREQSATEAYHLRALDGATVARVAVFRLAPTMTCHDVHAMMAGHNVVSISGLAAAFMIRHKLTDGVFSKSFRRIVMGIDPVMMRHDPVPLHLFAILTDHRLDHAATHAVMSMRLALMQIESASYQATKAWLRGHLPVTIFASATTDSSSDSIHATILEADKGMRVADTPGSSTLRELEASNTALQRQVIDMDVQINALLRTISDLKSYTNHQQASHGYSIQQYLHSHTCVNTQELPLIQSVMGDQAANAIQAMRTHANEAARSALTDKVTAPLTAQLSDTMAHLHEARAHNGDLTAQLAIAETDAMTAANERDRACELAVELESQLATMQREYDQTTRALLQDNEQLQHSAATAEAAAVSAFRPTPPLTYGTAPSALPAVGPGLTVPLLAAAIDPASLLL.

Disordered stretches follow at residues 14 to 46 and 230 to 268; these read SAMS…SSTA and LMSL…RPSH. Composition is skewed to low complexity over residues 20–46 and 238–258; these read PSLT…SSTA and PPRS…PRLP. Residues 635–700 adopt a coiled-coil conformation; it reads DLTAQLAIAE…HSAATAEAAA (66 aa).

Belongs to the aquareoviridae NS1 protein family.

Non-structural protein with ssRNA-binding activity. Is probably involved in the formation of viral inclusions, where the assembly of cores and the replication of viral RNA are thought to occur. In Aquareovirus C (isolate Golden shiner/USA/GSRV/1977) (AQRV-C), this protein is Non-structural protein 1 (S4).